A 571-amino-acid chain; its full sequence is DNA primase (571 aa).

The CHC2-type zinc finger occupies 20–44 (CPFHKEKTPSFQVDTEKGYYHCFGC). Residues 229–309 (AELVVVEGYM…KFRVRATSVP (81 aa)) enclose the Toprim domain. Mg(2+)-binding residues include glutamate 235, aspartate 280, and aspartate 282.

Belongs to the DnaG primase family. As to quaternary structure, monomer. Interacts with DnaB. The cofactor is Zn(2+). Mg(2+) serves as cofactor.

It catalyses the reaction ssDNA + n NTP = ssDNA/pppN(pN)n-1 hybrid + (n-1) diphosphate.. In terms of biological role, RNA polymerase that catalyzes the synthesis of short RNA molecules used as primers for DNA polymerase during DNA replication. The protein is DNA primase of Deinococcus radiodurans (strain ATCC 13939 / DSM 20539 / JCM 16871 / CCUG 27074 / LMG 4051 / NBRC 15346 / NCIMB 9279 / VKM B-1422 / R1).